A 162-amino-acid chain; its full sequence is Caveolin-2 (162 aa).

Over 1 to 86 the chain is Cytoplasmic; that stretch reads MGLETEKADV…FEISKYVIYK (86 aa). Y19 is subject to Phosphotyrosine; by SRC. Phosphoserine occurs at positions 20 and 23. Phosphotyrosine; by SRC is present on Y27. Phosphoserine is present on S36. An intramembrane region (helical) is located at residues 87–107; sequence FLTVFLAIPLAFAAGIIFATL. At 108–162 the chain is on the cytoplasmic side; the sequence is SCLHIWIIMPFVKTCLMVLPSVQTIWRSVTDAVIAPLCTSVGRVFSSVSLQLSRD.

This sequence belongs to the caveolin family. In terms of assembly, monomer or homodimer. Interacts with CAV1; the interaction forms a stable heterooligomeric complex that is required for targeting to lipid rafts and for caveolae formation. Tyrosine phosphorylated forms do not form heterooligomers with the Tyr-19-phosphorylated form existing as a monomer or dimer, and the Tyr-27-form as a monomer only. Interacts (tyrosine phosphorylated form) with the SH2 domain-containing proteins, RASA1, NCK1 and SRC. Interacts (tyrosine phosphorylated form) with INSR, the interaction (Tyr-27-phosphorylated form) is increased on insulin stimulation. Interacts (Tyr-19 phosphorylated form) with MAPK1 (phosphorylated form); the interaction, promoted by insulin, leads to nuclear location and MAPK1 activation. Interacts with STAT3; the interaction is increased on insulin-induced tyrosine phosphorylation leading to STAT activation. Phosphorylated on serine and tyrosine residues. CAV1 promotes phosphorylation on Ser-23 which then targets the complex to the plasma membrane, lipid rafts and caveolae. Phosphorylation on Ser-36 appears to modulate mitosis in endothelial cells. Phosphorylation on both Tyr-19 and Tyr-27 is required for insulin-induced 'Ser-727' phosphorylation of STAT3 and its activation. Phosphorylation on Tyr-19 is required for insulin-induced phosphorylation of MAPK1 and DNA binding of STAT3. Tyrosine phosphorylation is induced by both EGF and insulin (By. similarity).

The protein resides in the nucleus. It localises to the cytoplasm. It is found in the golgi apparatus membrane. Its subcellular location is the cell membrane. The protein localises to the membrane. The protein resides in the caveola. Functionally, may act as a scaffolding protein within caveolar membranes. Interacts directly with G-protein alpha subunits and can functionally regulate their activity. Acts as an accessory protein in conjunction with CAV1 in targeting to lipid rafts and driving caveolae formation. The Ser-36 phosphorylated form has a role in modulating mitosis in endothelial cells. Positive regulator of cellular mitogenesis of the MAPK signaling pathway. Required for the insulin-stimulated nuclear translocation and activation of MAPK1 and STAT3, and the subsequent regulation of cell cycle progression. This Carollia perspicillata (Seba's short-tailed bat) protein is Caveolin-2 (CAV2).